The primary structure comprises 120 residues: Large ribosomal subunit protein bL19 (120 aa).

The protein belongs to the bacterial ribosomal protein bL19 family.

Functionally, this protein is located at the 30S-50S ribosomal subunit interface and may play a role in the structure and function of the aminoacyl-tRNA binding site. This Microcystis aeruginosa (strain NIES-843 / IAM M-2473) protein is Large ribosomal subunit protein bL19.